The chain runs to 367 residues: Phosphoribosylaminoimidazole-succinocarboxamide synthase (367 aa).

It belongs to the SAICAR synthetase family.

It catalyses the reaction 5-amino-1-(5-phospho-D-ribosyl)imidazole-4-carboxylate + L-aspartate + ATP = (2S)-2-[5-amino-1-(5-phospho-beta-D-ribosyl)imidazole-4-carboxamido]succinate + ADP + phosphate + 2 H(+). The protein operates within purine metabolism; IMP biosynthesis via de novo pathway; 5-amino-1-(5-phospho-D-ribosyl)imidazole-4-carboxamide from 5-amino-1-(5-phospho-D-ribosyl)imidazole-4-carboxylate: step 1/2. The sequence is that of Phosphoribosylaminoimidazole-succinocarboxamide synthase from Aliivibrio fischeri (strain ATCC 700601 / ES114) (Vibrio fischeri).